Here is a 448-residue protein sequence, read N- to C-terminus: MEAATENQGRILLVDDESAILRTFRYCLEDEGYSVATANSAAQADTLMQRQVFDLCFLDLRLGEDNGLDVLAQMRIQAPWMRVVIVTAHSAVDTAVDAIQAGAADYLVKPCSPDQLRLATAKQLEVRQLSARLEALEGEVRKPKDGLDSHSPSMMAILETARQVAVTDANILILGESGTGKGELARAIHGWSKRAKKSCVTINCPSLTAELMESELFGHSRGAFTGASESTLGRVNQADGGTLFLDEIGDFPLTLQPKLLRFIQDKEYERVGDPVTRRADVRILAATNLNLEDMVRSGRFREDLLYRLNVITLHLPALRERSEDILTLADRFLARFVKEYARPARGFSEEARAALLNYRWPGNIRELRNVIERASIICPQERVEVSHLGMAEQPANNAPRVGAALSLDELEKAHIGAVLATSETLDQAAKTLGIDASTLYRKRKQYNL.

The Response regulatory domain occupies 10–124 (RILLVDDESA…QLRLATAKQL (115 aa)). Aspartate 59 carries the 4-aspartylphosphate modification. In terms of domain architecture, Sigma-54 factor interaction spans 147 to 376 (LDSHSPSMMA…LRNVIERASI (230 aa)). Residues 175-182 (GESGTGKG) and 238-247 (ADGGTLFLDE) each bind ATP. A DNA-binding region (H-T-H motif) is located at residues 425 to 444 (LDQAAKTLGIDASTLYRKRK).

It functions in the pathway glycan biosynthesis; alginate biosynthesis [regulation]. Its function is as follows. Positive regulator of the alginate biosynthetic gene algD. This is Alginate biosynthesis transcriptional regulatory protein AlgB (algB) from Pseudomonas syringae pv. tomato (strain ATCC BAA-871 / DC3000).